Reading from the N-terminus, the 341-residue chain is Killer cell immunoglobulin-like receptor 2DL3 (341 aa).

Residues 1–21 form the signal peptide; the sequence is MSLMVVSMVCVGFFLLQGAWP. The Extracellular portion of the chain corresponds to 22–245; that stretch reads HEGVHRKPSL…SETGNPRHLH (224 aa). Ig-like C2-type domains lie at 42 to 107 and 142 to 205; these read EETV…VTHS and GESV…FRDS. Cystine bridges form between Cys49–Cys100 and Cys149–Cys198. Residues Asn84, Asn178, and Asn211 are each glycosylated (N-linked (GlcNAc...) asparagine). The interval 220 to 239 is disordered; the sequence is VTGNPSNSWPSPTEPSSETG. Over residues 223–239 the composition is skewed to low complexity; that stretch reads NPSNSWPSPTEPSSETG. A helical transmembrane segment spans residues 246–265; sequence VLIGTSVVIILFILLLFFLL. Residues 266–341 lie on the Cytoplasmic side of the membrane; the sequence is HRWCCNKKNA…VYTELPNAEP (76 aa).

The protein belongs to the immunoglobulin superfamily. As to quaternary structure, interacts with ARRB2.

It localises to the cell membrane. Its function is as follows. Receptor on natural killer (NK) cells for HLA-C alleles (HLA-Cw1, HLA-Cw3 and HLA-Cw7). Inhibits the activity of NK cells thus preventing cell lysis. In Homo sapiens (Human), this protein is Killer cell immunoglobulin-like receptor 2DL3.